Consider the following 296-residue polypeptide: Nucleotide-binding protein str0831 (296 aa).

13-20 contacts ATP; it reads GMSGAGKT. 63 to 66 lines the GTP pocket; the sequence is DMRS.

The protein belongs to the RapZ-like family.

Its function is as follows. Displays ATPase and GTPase activities. The polypeptide is Nucleotide-binding protein str0831 (Streptococcus thermophilus (strain CNRZ 1066)).